The following is a 205-amino-acid chain: CASP-like protein 0U1 (205 aa).

Topologically, residues 1–38 (MDDAPGASDEAREPLLKRVGASVEGTSLMNHRLMKNPK) are cytoplasmic. A helical membrane pass occupies residues 39-57 (FRALLVESLMALTTFSFMA). The Extracellular portion of the chain corresponds to 58–89 (KQTEGLAGPELSTLNDCGEAGCGFTKFYQFKG). Residues 90–110 (VVGVYAGFWAYTVILIAMYVI) traverse the membrane as a helical segment. Residues 111 to 124 (RKAPPPGTEFASYA) lie on the Cytoplasmic side of the membrane. A helical transmembrane segment spans residues 125–145 (LFTAAMATFVVMSITECASVV). The Extracellular segment spans residues 146-159 (LSSDYYVCKNADYS). The helical transmembrane segment at 160–180 (LVSLIFAAATIVLNCLTCAFA) threads the bilayer. Residues 181–205 (WRQWGELKFVGLPKTLSALTETYPG) lie on the Cytoplasmic side of the membrane.

It belongs to the Casparian strip membrane proteins (CASP) family. In terms of assembly, homodimer and heterodimers.

The protein localises to the cell membrane. This chain is CASP-like protein 0U1, found in Ostreococcus lucimarinus (strain CCE9901).